The primary structure comprises 178 residues: Ribosome maturation factor RimP (178 aa).

The protein belongs to the RimP family.

The protein localises to the cytoplasm. Required for maturation of 30S ribosomal subunits. This Streptococcus pyogenes serotype M5 (strain Manfredo) protein is Ribosome maturation factor RimP.